Reading from the N-terminus, the 182-residue chain is UPF0316 protein lp_1140 (182 aa).

Helical transmembrane passes span 1–21 (MHIDMGMLVLIFIINFAYITL), 36–56 (FAAFASVIEITIYVLGLSLVL), and 62–82 (PINLVVYALGYGVGVYVGMVI).

The protein belongs to the UPF0316 family.

Its subcellular location is the cell membrane. The sequence is that of UPF0316 protein lp_1140 from Lactiplantibacillus plantarum (strain ATCC BAA-793 / NCIMB 8826 / WCFS1) (Lactobacillus plantarum).